The primary structure comprises 304 residues: tRNA (guanine(9)-N1)-methyltransferase (304 aa).

Basic and acidic residues-rich tracts occupy residues 1–26 (MENK…KNET) and 42–72 (RQQE…KRKI). Residues 1 to 72 (MENKDALDIG…LRKEERKRKI (72 aa)) form a disordered region. Residues 81–276 (QKKRIRLGKV…EVIPKRKGIL (196 aa)) form the SAM-dependent MTase TRM10-type domain. S-adenosyl-L-methionine-binding positions include leucine 183, glycine 203, 207 to 211 (DKNRY), cysteine 215, leucine 229, and 241 to 243 (KIL). The active-site Proton acceptor is the aspartate 207. The disordered stretch occupies residues 282–304 (SFDVSEDTRSQSNQSDSELEKEN). A Phosphoserine modification is found at serine 296.

The protein belongs to the class IV-like SAM-binding methyltransferase superfamily. TRM10 family. Monomer.

It localises to the cytoplasm. The protein localises to the nucleus. It carries out the reaction guanosine(9) in tRNA + S-adenosyl-L-methionine = N(1)-methylguanosine(9) in tRNA + S-adenosyl-L-homocysteine + H(+). Functionally, S-adenosyl-L-methionine-dependent guanine N(1)-methyltransferase that catalyzes the formation of N(1)-methylguanine at position 9 (m1G9) in cytoplasmic tRNA. The chain is tRNA (guanine(9)-N1)-methyltransferase from Schizosaccharomyces pombe (strain 972 / ATCC 24843) (Fission yeast).